The sequence spans 307 residues: MLVKGNEILLKAHKEGYGVGAFNFVNFEMLNAIFEAGNEENSPLFIQTSEGAIKYMGIDMAVGMVKTMCERYPHIPVALHLDHGTTFESCEKAVKAGFTSVMIDASHHAFEENLELTSKVVKMAHNAGVSVEAELGRLMGIEDNISVDEKDAVLVNPKEAEQFVKESQVDYLAPAIGTSHGAFKFKGEPKLDFERLQEVKRLTNIPLVLHGASAIPDNVRKSYLDAGGDLKGSKGVPFEFLQESVKGGINKVNTDTDLRIAFIAEVRKVANEDKSQFDLRKFFSPAQLALKNVVKERMKLLGSANKI.

Serine 49 is a binding site for D-glyceraldehyde 3-phosphate. The active-site Proton donor is the aspartate 82. Residues histidine 83, aspartate 104, glutamate 134, and histidine 180 each coordinate Zn(2+). Residue glycine 181 participates in dihydroxyacetone phosphate binding. Histidine 210 is a binding site for Zn(2+). Dihydroxyacetone phosphate-binding positions include 211 to 213 and 253 to 256; these read GAS and NTDT.

This sequence belongs to the class II fructose-bisphosphate aldolase family. As to quaternary structure, homodimer. The cofactor is Zn(2+).

It catalyses the reaction beta-D-fructose 1,6-bisphosphate = D-glyceraldehyde 3-phosphate + dihydroxyacetone phosphate. The protein operates within carbohydrate degradation; glycolysis; D-glyceraldehyde 3-phosphate and glycerone phosphate from D-glucose: step 4/4. Its function is as follows. Catalyzes the aldol condensation of dihydroxyacetone phosphate (DHAP or glycerone-phosphate) with glyceraldehyde 3-phosphate (G3P) to form fructose 1,6-bisphosphate (FBP) in gluconeogenesis and the reverse reaction in glycolysis. In Helicobacter pylori (strain ATCC 700392 / 26695) (Campylobacter pylori), this protein is Fructose-bisphosphate aldolase (fba).